The chain runs to 1127 residues: Structural protein MDM1 (1127 aa).

Residues 85–273 (NAQIGKELES…WNLRIVSLSQ (189 aa)) enclose the PXA domain. Phosphoserine is present on residues serine 670, serine 673, and serine 692. Residues 705 to 762 (SNNFRDNIASLTISIDQIEKELELLRHLILKADLTNNQMQLKILKKSQRTLLKELEMK) are a coiled coil. The 124-residue stretch at 782–905 (TKIYIRSYFS…RFLTDPTPFK (124 aa)) folds into the PX domain.

This sequence belongs to the sorting nexin family.

Its subcellular location is the cytoplasm. Its function is as follows. Essential for mitotic growth. Mediates organelle inheritance. The chain is Structural protein MDM1 (MDM1) from Saccharomyces cerevisiae (strain ATCC 204508 / S288c) (Baker's yeast).